The chain runs to 447 residues: Acid phosphatase (447 aa).

An N-terminal signal peptide occupies residues 1-17 (MKPSVATLLATVSLVYA). N-linked (GlcNAc...) asparagine glycans are attached at residues asparagine 119, asparagine 150, asparagine 177, asparagine 186, and asparagine 208. Aspartate 215 acts as the Proton donor in catalysis. 7 N-linked (GlcNAc...) asparagine glycosylation sites follow: asparagine 217, asparagine 234, asparagine 240, asparagine 315, asparagine 332, asparagine 382, and asparagine 405. A lipid anchor (GPI-like-anchor amidated serine) is attached at serine 419. A propeptide spans 420-447 (ASSNAAVSAVAPAAGVSGLLLGLALNLL) (removed in mature form).

The GPI-like anchor contains a phosphoceramide lipid group. The anchor position has not been determined.

Its subcellular location is the cell membrane. The catalysed reaction is a phosphate monoester + H2O = an alcohol + phosphate. With respect to regulation, inhibited by NaF, molybdate and vanadate. Has both phosphomonoesterase and phosphodiesterase activity. Cleaves a broad range of phosphate esters. The chain is Acid phosphatase (phoA) from Aspergillus fumigatus (strain ATCC MYA-4609 / CBS 101355 / FGSC A1100 / Af293) (Neosartorya fumigata).